The chain runs to 511 residues: Aldehyde dehydrogenase 2, mitochondrial (511 aa).

The N-terminal 21 residues, 1 to 21 (MSKSKTKTDKRNQSSLSRIKL), are a transit peptide targeting the mitochondrion. Residues 72–92 (VSEKSQHDSTEEDITQVSEKS) form a disordered region. Residue 274 to 279 (GSTLVG) participates in NAD(+) binding. Catalysis depends on E297, which acts as the Proton acceptor. C331 acts as the Nucleophile in catalysis.

Belongs to the aldehyde dehydrogenase family.

It localises to the mitochondrion matrix. The catalysed reaction is an aldehyde + NAD(+) + H2O = a carboxylate + NADH + 2 H(+). It participates in alcohol metabolism; ethanol degradation; acetate from ethanol: step 2/2. The chain is Aldehyde dehydrogenase 2, mitochondrial (ALD2) from Saccharomyces cerevisiae (Baker's yeast).